Consider the following 297-residue polypeptide: E3 ubiquitin-protein ligase TRIM52 (297 aa).

Residues C20–E62 form an RING-type; degenerate zinc finger. An important for rapid proteolytic degradation by the proteasome region spans residues V72–P167. Residues N222–L263 form a B box-type zinc finger. Residues C227, H230, C249, and H255 each contribute to the Zn(2+) site.

This sequence belongs to the TRIM/RBCC family. As to quaternary structure, (Microbial infection) Interacts with Japanese encephalitis virus non-structural protein 2 (NS2A); mediates the ubiquitination of NS2A, targeting it for proteasome-mediated degradation. Post-translationally, autoubiquitinated. Polyubiquitinated. Undergoes extremely rapid proteolytic degradation by the proteasome.

It is found in the cytoplasm. It localises to the cytosol. The protein localises to the nucleus. It carries out the reaction S-ubiquitinyl-[E2 ubiquitin-conjugating enzyme]-L-cysteine + [acceptor protein]-L-lysine = [E2 ubiquitin-conjugating enzyme]-L-cysteine + N(6)-ubiquitinyl-[acceptor protein]-L-lysine.. It participates in protein modification; protein ubiquitination. Its function is as follows. E3 ubiquitin-protein ligase. Positively regulates the NF-kappa-B signaling pathway. (Microbial infection) Exhibits antiviral activity against Japanese encephalitis virus (JEV). Ubiquitinates the viral non-structural protein 2 (NS2A) and targets it for proteasome-mediated degradation. This chain is E3 ubiquitin-protein ligase TRIM52 (TRIM52), found in Homo sapiens (Human).